We begin with the raw amino-acid sequence, 360 residues long: Aspartate beta-hydroxylase domain-containing protein 1 (360 aa).

At 1–45 the chain is on the cytoplasmic side; sequence MWKGGNQEAVIEGSGGELGVPGSWGLQDAACHLARASLPIMFPWP. Residues 46 to 68 traverse the membrane as a helical segment; the sequence is LPLGSSALTMLLGALTSLFLWYC. The Lumenal segment spans residues 69–360; sequence YRLGSQDMQA…ALDFVFAPDP (292 aa).

The protein belongs to the aspartyl/asparaginyl beta-hydroxylase family.

Its subcellular location is the membrane. In Mus musculus (Mouse), this protein is Aspartate beta-hydroxylase domain-containing protein 1 (Asphd1).